The chain runs to 424 residues: DNA primase DnaG (424 aa).

Residues 166 to 241 (DTIIIVEGRA…KVDFIARAPE (76 aa)) enclose the Toprim domain. Mg(2+)-binding residues include glutamate 172, aspartate 215, and aspartate 217.

Belongs to the archaeal DnaG primase family. Forms a ternary complex with MCM helicase and DNA. Component of the archaeal exosome complex. It depends on Mg(2+) as a cofactor.

It carries out the reaction ssDNA + n NTP = ssDNA/pppN(pN)n-1 hybrid + (n-1) diphosphate.. Its function is as follows. RNA polymerase that catalyzes the synthesis of short RNA molecules used as primers for DNA polymerase during DNA replication. Also part of the exosome, which is a complex involved in RNA degradation. Acts as a poly(A)-binding protein that enhances the interaction between heteromeric, adenine-rich transcripts and the exosome. The polypeptide is DNA primase DnaG (Staphylothermus marinus (strain ATCC 43588 / DSM 3639 / JCM 9404 / F1)).